A 186-amino-acid polypeptide reads, in one-letter code: Alkyl hydroperoxide reductase AhpD (186 aa).

Residue C132 is the Proton donor of the active site. C132 and C135 are joined by a disulfide. Residue C135 is the Cysteine sulfenic acid (-SOH) intermediate of the active site.

It belongs to the AhpD family.

The enzyme catalyses N(6)-[(R)-dihydrolipoyl]-L-lysyl-[lipoyl-carrier protein] + a hydroperoxide = N(6)-[(R)-lipoyl]-L-lysyl-[lipoyl-carrier protein] + an alcohol + H2O. Functionally, antioxidant protein with alkyl hydroperoxidase activity. Required for the reduction of the AhpC active site cysteine residues and for the regeneration of the AhpC enzyme activity. This chain is Alkyl hydroperoxide reductase AhpD, found in Anaeromyxobacter dehalogenans (strain 2CP-1 / ATCC BAA-258).